A 325-amino-acid chain; its full sequence is Glucosyl-3-phosphoglycerate synthase (325 aa).

UDP-alpha-D-glucose is bound by residues 37–41, Ser71, Lys104, and 124–125; these read PSLNE and DS. Asp126 is a Mn(2+) binding site. 171–174 provides a ligand contact to (2R)-3-phosphoglycerate; the sequence is GRVT. Residues 216 to 219 and 243 to 248 contribute to the UDP-alpha-D-glucose site; these read YGVE and RIHDNQ. His245 contacts Mn(2+). Asn247 is a binding site for (2R)-3-phosphoglycerate.

The protein belongs to the glycosyltransferase 2 family. As to quaternary structure, homodimer in solution. The cofactor is Co(2+). Requires Mg(2+) as cofactor. It depends on Mn(2+) as a cofactor. Ni(2+) serves as cofactor. Zn(2+) is required as a cofactor.

It carries out the reaction an NDP-alpha-D-glucose + (2R)-3-phosphoglycerate = (2R)-2-O-(alpha-D-glucopyranosyl)-3-phospho-glycerate + a ribonucleoside 5'-diphosphate + H(+). The enzyme catalyses (2R)-3-phosphoglycerate + UDP-alpha-D-glucose = (2R)-2-O-(alpha-D-glucopyranosyl)-3-phospho-glycerate + UDP + H(+). It catalyses the reaction ADP-alpha-D-glucose + (2R)-3-phosphoglycerate = (2R)-2-O-(alpha-D-glucopyranosyl)-3-phospho-glycerate + ADP + H(+). With respect to regulation, inhibited by ADP and EDTA. Its function is as follows. Involved in the biosynthesis of the compatible solute mannosylglucosylglycerate through a phosphorylating pathway. Catalyzes the transfer of the glucose moiety from a nuleotide sugar such as UDP-alpha-D-glucose to the position 2 of 3-phospho-D-glycerate (3-PGA) to form glucosyl-3-phosphoglycerate (GPG). UDP-glucose is the preferred substrate, but it can be partially replaced by ADP-glucose. The sequence is that of Glucosyl-3-phosphoglycerate synthase from Petrotoga mobilis (strain DSM 10674 / SJ95).